Here is a 1122-residue protein sequence, read N- to C-terminus: Histidine kinase CKI1 (1122 aa).

Residues 1–12 (MMVKVTKLVASR) are Cytoplasmic-facing. The helical transmembrane segment at 13–33 (PIVVFCVLAFLVVVFECIWIS) threads the bilayer. The Extracellular portion of the chain corresponds to 34 to 345 (NWRTTTENLV…KHQAEKAKYQ (312 aa)). Residues 346 to 366 (LIVVMIFLGFGWPVWFVWFMM) traverse the membrane as a helical segment. The Cytoplasmic segment spans residues 367 to 1122 (QATRREMHMR…VIREIESKRH (756 aa)). The Histidine kinase domain occupies 402 to 671 (NASHDIRGAL…CFQFNVLLTT (270 aa)). The residue at position 405 (His-405) is a Phosphohistidine; by autocatalysis. Residues 918–928 (AERSPKHKVQE) are compositionally biased toward basic and acidic residues. A disordered region spans residues 918–981 (AERSPKHKVQ…QETSKPSDDE (64 aa)). One can recognise a Response regulatory domain in the interval 987 to 1120 (RVLVVDDNFI…ANVIREIESK (134 aa)). The residue at position 1050 (Asp-1050) is a 4-aspartylphosphate.

In terms of assembly, homodimer. Interacts with AHP2 and AHP3. Expressed in vascular tissues of inflorescence stems and floral organs, especially in procambium cells, and in siliques.

The protein localises to the cell membrane. It catalyses the reaction ATP + protein L-histidine = ADP + protein N-phospho-L-histidine.. In terms of biological role, essential protein. Functions as a histidine kinase and transmits the stress signal to a downstream MAPK cascade. This protein undergoes an ATP-dependent autophosphorylation at a conserved histidine residue in the kinase core, and a phosphoryl group is then transferred to a conserved aspartate residue in the receiver domain. Required for the development of megagametophyte in female gametophyte (embryo sac) independently of cytokinin. Contributes to vascular bundle formation and secondary growth in a cytokinin-independent manner, probably by promoting the maintenance of mitotic activity and/or identity of procambial cells. Seems to influence and promote the cytokinin signaling pathway. The protein is Histidine kinase CKI1 (CKI1) of Arabidopsis thaliana (Mouse-ear cress).